The chain runs to 191 residues: Small ribosomal subunit protein uS7 (191 aa).

It belongs to the universal ribosomal protein uS7 family. As to quaternary structure, part of the 30S ribosomal subunit.

One of the primary rRNA binding proteins, it binds directly to 16S rRNA where it nucleates assembly of the head domain of the 30S subunit. Is located at the subunit interface close to the decoding center. The sequence is that of Small ribosomal subunit protein uS7 from Methanocaldococcus jannaschii (strain ATCC 43067 / DSM 2661 / JAL-1 / JCM 10045 / NBRC 100440) (Methanococcus jannaschii).